The sequence spans 286 residues: MKQHQSADNSQGQLYIVPTPIGNLADITQRALEVLQAVDLIAAEDTRHTGLLLQHFGINARLFALHDHNEQQKAETLLAKLQEGQNIALVSDAGTPLINDPGYHLVRTCREAGIRVVPLPGPCAAITALSAAGLPSDRFCYEGFLPAKSKGRRDALKAIEAEPRTLIFYESTHRLLDSLEDIVAVLGESRYVVLARELTKTWETIHGAPVGELLAWVKEDENRRKGEMVLIVEGHKAQEEDLPADALRTLALLQAELPLKKAAALAAEIHGVKKNALYKYALEQQG.

The protein belongs to the methyltransferase superfamily. RsmI family.

The protein localises to the cytoplasm. The enzyme catalyses cytidine(1402) in 16S rRNA + S-adenosyl-L-methionine = 2'-O-methylcytidine(1402) in 16S rRNA + S-adenosyl-L-homocysteine + H(+). Catalyzes the 2'-O-methylation of the ribose of cytidine 1402 (C1402) in 16S rRNA. This chain is Ribosomal RNA small subunit methyltransferase I, found in Escherichia coli O157:H7.